Reading from the N-terminus, the 1377-residue chain is DNA-directed RNA polymerase subunit beta' (1377 aa).

Residues Cys70, Cys72, Cys85, and Cys88 each contribute to the Zn(2+) site. Residues Asp460, Asp462, and Asp464 each coordinate Mg(2+). The Zn(2+) site is built by Cys808, Cys882, Cys889, and Cys892.

The protein belongs to the RNA polymerase beta' chain family. As to quaternary structure, the RNAP catalytic core consists of 2 alpha, 1 beta, 1 beta' and 1 omega subunit. When a sigma factor is associated with the core the holoenzyme is formed, which can initiate transcription. The cofactor is Mg(2+). Requires Zn(2+) as cofactor.

The catalysed reaction is RNA(n) + a ribonucleoside 5'-triphosphate = RNA(n+1) + diphosphate. In terms of biological role, DNA-dependent RNA polymerase catalyzes the transcription of DNA into RNA using the four ribonucleoside triphosphates as substrates. The sequence is that of DNA-directed RNA polymerase subunit beta' from Geotalea daltonii (strain DSM 22248 / JCM 15807 / FRC-32) (Geobacter daltonii).